We begin with the raw amino-acid sequence, 643 residues long: tRNA 5-methylaminomethyl-2-thiouridine biosynthesis bifunctional protein MnmC (643 aa).

Residues 1-223 (MPDRLVSATL…VDDRLVGDYA (223 aa)) are tRNA (mnm(5)s(2)U34)-methyltransferase. Residues 247–643 (IGAGLAGCAV…LRARRVGSAG (397 aa)) are FAD-dependent cmnm(5)s(2)U34 oxidoreductase.

It in the N-terminal section; belongs to the methyltransferase superfamily. tRNA (mnm(5)s(2)U34)-methyltransferase family. The protein in the C-terminal section; belongs to the DAO family. Requires FAD as cofactor.

It is found in the cytoplasm. The enzyme catalyses 5-aminomethyl-2-thiouridine(34) in tRNA + S-adenosyl-L-methionine = 5-methylaminomethyl-2-thiouridine(34) in tRNA + S-adenosyl-L-homocysteine + H(+). Its function is as follows. Catalyzes the last two steps in the biosynthesis of 5-methylaminomethyl-2-thiouridine (mnm(5)s(2)U) at the wobble position (U34) in tRNA. Catalyzes the FAD-dependent demodification of cmnm(5)s(2)U34 to nm(5)s(2)U34, followed by the transfer of a methyl group from S-adenosyl-L-methionine to nm(5)s(2)U34, to form mnm(5)s(2)U34. The chain is tRNA 5-methylaminomethyl-2-thiouridine biosynthesis bifunctional protein MnmC from Burkholderia orbicola (strain AU 1054).